Consider the following 168-residue polypeptide: Protein GRIM REAPER (168 aa).

The signal sequence occupies residues 1-30 (MVIKIPNTFIKATSLLSLILYFLIIATSKS). An N-linked (GlcNAc...) asparagine glycan is attached at asparagine 59.

It belongs to the STIG1 family. In terms of assembly, interacts with PRK5 and to a lower extent with PRK4. As to expression, highly expressed in flowers, and at very low levels in leaves.

It localises to the secreted. Its subcellular location is the extracellular space. The protein localises to the apoplast. In terms of biological role, involved in the regulation of cell death induced by extracellular reactive oxygen species. Only the processed peptide, and not the full length GRI can bind in vivo to the extracellular domain of the receptor PRK5. The GRIp-induced cell death is superoxide and salicylic acid dependent. This chain is Protein GRIM REAPER, found in Arabidopsis thaliana (Mouse-ear cress).